The chain runs to 98 residues: Defensin-like protein 192 (98 aa).

The first 27 residues, 1–27 (MATKSVSTFAIFFILVLAIFETPEIEA), serve as a signal peptide directing secretion. Cystine bridges form between cysteine 32-cysteine 86, cysteine 45-cysteine 69, cysteine 54-cysteine 81, and cysteine 58-cysteine 83.

It belongs to the DEFL family. Protease inhibitor I18 (RTI/MTI-2) subfamily.

Its subcellular location is the secreted. This Arabidopsis thaliana (Mouse-ear cress) protein is Defensin-like protein 192 (ATTI7).